The primary structure comprises 442 residues: Glutamyl-tRNA(Gln) amidotransferase subunit D (442 aa).

A disordered region spans residues Thr-63 to Ser-84. The region spanning Pro-102–Ser-429 is the Asparaginase/glutaminase domain. Active-site residues include Thr-112, Thr-188, Asp-189, and Lys-265.

Belongs to the asparaginase 1 family. GatD subfamily. As to quaternary structure, heterodimer of GatD and GatE.

It catalyses the reaction L-glutamyl-tRNA(Gln) + L-glutamine + ATP + H2O = L-glutaminyl-tRNA(Gln) + L-glutamate + ADP + phosphate + H(+). Functionally, allows the formation of correctly charged Gln-tRNA(Gln) through the transamidation of misacylated Glu-tRNA(Gln) in organisms which lack glutaminyl-tRNA synthetase. The reaction takes place in the presence of glutamine and ATP through an activated gamma-phospho-Glu-tRNA(Gln). The GatDE system is specific for glutamate and does not act on aspartate. The sequence is that of Glutamyl-tRNA(Gln) amidotransferase subunit D from Haloquadratum walsbyi (strain DSM 16790 / HBSQ001).